The primary structure comprises 104 residues: UPF0145 protein Hlac_1015 (104 aa).

Belongs to the UPF0145 family.

This Halorubrum lacusprofundi (strain ATCC 49239 / DSM 5036 / JCM 8891 / ACAM 34) protein is UPF0145 protein Hlac_1015.